Reading from the N-terminus, the 320-residue chain is Tyrosine recombinase Synpcc7942_B2651 (320 aa).

The region spanning 16–106 is the Core-binding (CB) domain; the sequence is VQDWDVLQML…ALKSLVRFSR (91 aa). One can recognise a Tyr recombinase domain in the interval 127 to 313; the sequence is RDTTGTTPER…RQDFQGECTE (187 aa). Active-site residues include Arg-167, Lys-193, His-264, Arg-267, and His-291. Tyr-300 functions as the O-(3'-phospho-DNA)-tyrosine intermediate in the catalytic mechanism.

This sequence belongs to the 'phage' integrase family.

The protein resides in the cytoplasm. Site-specific tyrosine recombinase, which acts by catalyzing the cutting and rejoining of the recombining DNA molecules. In Synechococcus elongatus (strain ATCC 33912 / PCC 7942 / FACHB-805) (Anacystis nidulans R2), this protein is Tyrosine recombinase Synpcc7942_B2651.